The following is a 347-amino-acid chain: Histone deacetylase 11 (347 aa).

The histone deacetylase stretch occupies residues 14 to 318 (TRWPIVYSPR…ARIIADSILN (305 aa)). Residue His-143 is part of the active site.

The protein belongs to the histone deacetylase family. As to quaternary structure, interacts with HDAC6.

It is found in the nucleus. It carries out the reaction N(6)-acetyl-L-lysyl-[histone] + H2O = L-lysyl-[histone] + acetate. In terms of biological role, responsible for the deacetylation of lysine residues on the N-terminal part of the core histones (H2A, H2B, H3 and H4). Histone deacetylation gives a tag for epigenetic repression and plays an important role in transcriptional regulation, cell cycle progression and developmental events. Histone deacetylases act via the formation of large multiprotein complexes. This Macaca fascicularis (Crab-eating macaque) protein is Histone deacetylase 11 (HDAC11).